The chain runs to 206 residues: Pro-glucagon (206 aa).

A signal peptide spans 1-22 (MKMKSIYFIAGLLLMIVQGSWQ). The segment at 27 to 57 (DTEEKSRSFKASQSEPLDESRQLNEVKRHSQ) is disordered. The segment covering 44-54 (DESRQLNEVKR) has biased composition (basic and acidic residues). A propeptide spanning residues 86–109 (NGQQGQEDKENDKFPDQLSSNAIS) is cleaved from the precursor. The residue at position 147 (arginine 147) is an Arginine amide. 2 consecutive propeptides follow at residues 151 to 163 (DFPE…EEMG) and 199 to 206 (RDLLGEYQ).

Belongs to the glucagon family. Proglucagon is post-translationally processed in a tissue-specific manner in pancreatic A cells and intestinal L cells. In pancreatic A cells, the major bioactive hormone is glucagon cleaved by PCSK2/PC2. In the intestinal L cells PCSK1/PC1 liberates GLP-1 and GLP-2. GLP-1 is further N-terminally truncated by post-translational processing in the intestinal L cells resulting in GLP-1(7-37) GLP-1-(7-36)amide.

It is found in the secreted. Its function is as follows. Plays a key role in glucose metabolism and homeostasis. Regulates blood glucose by increasing gluconeogenesis and decreasing glycolysis. In terms of biological role, potent stimulator of glucose-dependent insulin release. Plays important roles on gastric motility and the suppression of plasma glucagon levels. May be involved in the suppression of satiety and stimulation of glucose disposal in peripheral tissues, independent of the actions of insulin. Has growth-promoting activities on intestinal epithelium. May also regulate the hypothalamic pituitary axis (HPA) via effects on LH, TSH, CRH, oxytocin, and vasopressin secretion. Increases islet mass through stimulation of islet neogenesis and pancreatic beta cell proliferation. Functionally, stimulates intestinal growth and up-regulates villus height in the small intestine, concomitant with increased crypt cell proliferation and decreased enterocyte apoptosis. The gastrointestinal tract, from the stomach to the colon is the principal target for GLP-2 action. Plays a key role in nutrient homeostasis, enhancing nutrient assimilation through enhanced gastrointestinal function, as well as increasing nutrient disposal. Stimulates intestinal glucose transport and decreases mucosal permeability. This Gallus gallus (Chicken) protein is Pro-glucagon (GCG).